Here is a 228-residue protein sequence, read N- to C-terminus: Glucose-induced degradation protein 8-A homolog (228 aa).

Positions 25-57 (QRADMNRLIMNYLVTEGFKEAAEKFRMESGIEP) constitute a LisH domain. One can recognise a CTLH domain in the interval 63-120 (SLDERIKIREMVLKGQIQEAIALINSLHPELLDTNRYLYFHLQQQHLIELIRLRETEA).

This sequence belongs to the GID8 family. As to quaternary structure, identified in the CTLH complex that contains at least MAEA, RMND5A (or alternatively its paralog RMND5B), GID8, WDR26, and RANBP9 and/or RANBP10. Interacts with CTNNB1.

Core component of the CTLH E3 ubiquitin-protein ligase complex that selectively accepts ubiquitin from UBE2H and mediates ubiquitination and subsequent proteasomal degradation of target proteins. Acts as a positive regulator of Wnt signaling pathway by promoting beta-catenin (CTNNB1) nuclear accumulation. Required for normal Wnt signaling and normal dorsoventral patterning during embryogenesis. This is Glucose-induced degradation protein 8-A homolog (gid8a) from Danio rerio (Zebrafish).